We begin with the raw amino-acid sequence, 132 residues long: UPF0292 protein PYRAB04740 (132 aa).

The Toprim domain occupies Asp-20 to Leu-100. Positions 26, 69, and 71 each coordinate Mg(2+).

It belongs to the UPF0292 family. The cofactor is Mg(2+).

In Pyrococcus abyssi (strain GE5 / Orsay), this protein is UPF0292 protein PYRAB04740.